Here is a 487-residue protein sequence, read N- to C-terminus: 3-ketoacyl-CoA synthase 17 (487 aa).

A run of 2 helical transmembrane segments spans residues 23–43 and 57–77; these read LITH…FMNV and STGF…FFMS. In terms of domain architecture, FAE spans 74–363; that stretch reads FFMSRPRSIY…FFATFVAKRL (290 aa). Catalysis depends on residues cysteine 218, histidine 297, histidine 382, histidine 386, histidine 415, and asparagine 419.

It belongs to the thiolase-like superfamily. Chalcone/stilbene synthases family. As to expression, expressed in flowers.

Its subcellular location is the membrane. The catalysed reaction is a very-long-chain acyl-CoA + malonyl-CoA + H(+) = a very-long-chain 3-oxoacyl-CoA + CO2 + CoA. It participates in lipid metabolism; fatty acid biosynthesis. Its activity is regulated as follows. Inhibited by K3 herbicides such as alachlor, allidochlor, anilofos, cafenstrole, fentrazamide and flufenacet. Strongly inhibited by metazachlor. Its function is as follows. Active on saturated acyl-CoAs up to C22. Mediates the synthesis of VLCFAs from 20 to 26 carbons in length (e.g. C20:1, C20, C24, C26). This chain is 3-ketoacyl-CoA synthase 17, found in Arabidopsis thaliana (Mouse-ear cress).